The primary structure comprises 663 residues: MPFQDYFQKKKAAFINRNNKSNADASALRDINDININFAAKSKNYVFPLTKLPDELMQEVFSHLPQPDRLQLCLVNKRLNKIATKLLYRRIYLNDSNVVKSDFMHLAINWTLLNLPSSLKEEESRDIANCKLKKLIETLQNNIHITEVIQWIRINWDLDSTLQRSILSILCNQGKSLQRLENVTDPACNDIISNGHFSRSNVSSFDMAPPNSLPEMVVPENYIPNLTKYLSQRISSRLSHMTLFIDPLKLFNYLYPLDIKLQIIDLKLHWRREFYNNDYFVKKIRPGNPLTKLSEVFDKRTLKILTIISWNDTLLKRETEMLKDFKEFENLEDLSLISIKQDVHILVDLFSSLTNLKRLKMDFLEEYVPEPTNPHIFLSILLACSKLQFIDLRYDGLIPQIINIQENKFQLNQQCNCTNCQIVFSDILKGKIFMFPEDYYIHDLQDIAAKDIFKMMKYLSLLPYSKACDAYPSVRTQPMNLTNFVTKMNRNLLEYRNSKSQLVPKIVNNPHQHSTVTSTSTAHMSEPEMIIIDDDDDDDEINAAIPPSSDDTAATISTDLELPHESLTKRDIIMCYHALIHHFKSIYVTFLKSFPHLRFLMLNDIPTIVMEENNERIFEPVFYHYDYKSNLYGWSKESNKNLENDSNNNNNNSDTIARIATVM.

The F-box domain maps to 46–91; it reads VFPLTKLPDELMQEVFSHLPQPDRLQLCLVNKRLNKIATKLLYRRI.

In terms of assembly, interacts with SKP1. Component of the probable SCF(DAS1) complex containing CDC53, SKP1, RBX1 and DAS1.

Its pathway is protein modification; protein ubiquitination. Functionally, substrate recognition component of a SCF (SKP1-CUL1-F-box protein) E3 ubiquitin-protein ligase complex which mediates the ubiquitination and subsequent proteasomal degradation of target proteins. Probably recognizes and binds to phosphorylated target proteins. This is F-box protein DAS1 (DAS1) from Saccharomyces cerevisiae (strain ATCC 204508 / S288c) (Baker's yeast).